The following is a 131-amino-acid chain: Large ribosomal subunit protein eL14 (131 aa).

Belongs to the eukaryotic ribosomal protein eL14 family. In terms of assembly, component of the large ribosomal subunit. Mature ribosomes consist of a small (40S) and a large (60S) subunit. The 40S subunit contains about 32 different proteins and 1 molecule of RNA (18S). The 60S subunit contains 45 different proteins and 3 molecules of RNA (25S, 5.8S and 5S).

Its subcellular location is the cytoplasm. Its function is as follows. Component of the ribosome, a large ribonucleoprotein complex responsible for the synthesis of proteins in the cell. The small ribosomal subunit (SSU) binds messenger RNAs (mRNAs) and translates the encoded message by selecting cognate aminoacyl-transfer RNA (tRNA) molecules. The large subunit (LSU) contains the ribosomal catalytic site termed the peptidyl transferase center (PTC), which catalyzes the formation of peptide bonds, thereby polymerizing the amino acids delivered by tRNAs into a polypeptide chain. The nascent polypeptides leave the ribosome through a tunnel in the LSU and interact with protein factors that function in enzymatic processing, targeting, and the membrane insertion of nascent chains at the exit of the ribosomal tunnel. The polypeptide is Large ribosomal subunit protein eL14 (Candida albicans (strain SC5314 / ATCC MYA-2876) (Yeast)).